A 132-amino-acid polypeptide reads, in one-letter code: UPF0251 protein PTH_0588 (132 aa).

It belongs to the UPF0251 family.

The sequence is that of UPF0251 protein PTH_0588 from Pelotomaculum thermopropionicum (strain DSM 13744 / JCM 10971 / SI).